The primary structure comprises 167 residues: Crossover junction endodeoxyribonuclease RuvC (167 aa).

Catalysis depends on residues Asp7, Glu67, and Asp140. Mg(2+)-binding residues include Asp7, Glu67, and Asp140.

The protein belongs to the RuvC family. As to quaternary structure, homodimer which binds Holliday junction (HJ) DNA. The HJ becomes 2-fold symmetrical on binding to RuvC with unstacked arms; it has a different conformation from HJ DNA in complex with RuvA. In the full resolvosome a probable DNA-RuvA(4)-RuvB(12)-RuvC(2) complex forms which resolves the HJ. The cofactor is Mg(2+).

Its subcellular location is the cytoplasm. The catalysed reaction is Endonucleolytic cleavage at a junction such as a reciprocal single-stranded crossover between two homologous DNA duplexes (Holliday junction).. Functionally, the RuvA-RuvB-RuvC complex processes Holliday junction (HJ) DNA during genetic recombination and DNA repair. Endonuclease that resolves HJ intermediates. Cleaves cruciform DNA by making single-stranded nicks across the HJ at symmetrical positions within the homologous arms, yielding a 5'-phosphate and a 3'-hydroxyl group; requires a central core of homology in the junction. The consensus cleavage sequence is 5'-(A/T)TT(C/G)-3'. Cleavage occurs on the 3'-side of the TT dinucleotide at the point of strand exchange. HJ branch migration catalyzed by RuvA-RuvB allows RuvC to scan DNA until it finds its consensus sequence, where it cleaves and resolves the cruciform DNA. The chain is Crossover junction endodeoxyribonuclease RuvC from Moorella thermoacetica (strain ATCC 39073 / JCM 9320).